The primary structure comprises 210 residues: Prolactin (210 aa).

Positions Met1–Ala23 are cleaved as a signal peptide. Disulfide bonds link Cys69–Cys183 and Cys200–Cys210.

The protein belongs to the somatotropin/prolactin family.

Its subcellular location is the secreted. This Oncorhynchus mykiss (Rainbow trout) protein is Prolactin (prl).